The sequence spans 351 residues: UDP-N-acetylglucosamine--N-acetylmuramyl-(pentapeptide) pyrophosphoryl-undecaprenol N-acetylglucosamine transferase (351 aa).

UDP-N-acetyl-alpha-D-glucosamine contacts are provided by residues 13 to 15, asparagine 125, arginine 161, serine 189, isoleucine 241, 260 to 265, and glutamine 285; these read TGG and ALTVCE.

Belongs to the glycosyltransferase 28 family. MurG subfamily.

The protein localises to the cell inner membrane. The enzyme catalyses di-trans,octa-cis-undecaprenyl diphospho-N-acetyl-alpha-D-muramoyl-L-alanyl-D-glutamyl-meso-2,6-diaminopimeloyl-D-alanyl-D-alanine + UDP-N-acetyl-alpha-D-glucosamine = di-trans,octa-cis-undecaprenyl diphospho-[N-acetyl-alpha-D-glucosaminyl-(1-&gt;4)]-N-acetyl-alpha-D-muramoyl-L-alanyl-D-glutamyl-meso-2,6-diaminopimeloyl-D-alanyl-D-alanine + UDP + H(+). It functions in the pathway cell wall biogenesis; peptidoglycan biosynthesis. Cell wall formation. Catalyzes the transfer of a GlcNAc subunit on undecaprenyl-pyrophosphoryl-MurNAc-pentapeptide (lipid intermediate I) to form undecaprenyl-pyrophosphoryl-MurNAc-(pentapeptide)GlcNAc (lipid intermediate II). The sequence is that of UDP-N-acetylglucosamine--N-acetylmuramyl-(pentapeptide) pyrophosphoryl-undecaprenol N-acetylglucosamine transferase from Haemophilus influenzae (strain PittEE).